The sequence spans 2034 residues: Pecanex-like protein 3 (2034 aa).

2 helical membrane passes run 33–53 (CFHL…YMVL) and 54–74 (PPSL…FATI). Residues 96–118 (STMGELEEEPAQGDSNPPRDPGV) form a disordered region. At Ser127 the chain carries Phosphoserine. Thr129 is subject to Phosphothreonine. Disordered stretches follow at residues 193 to 242 (IGDL…PLLK), 260 to 517 (DRAL…LRPP), and 540 to 625 (VLPA…SHSR). Positions 294-303 (KAGSSDSCFS) are enriched in polar residues. Positions 305–319 (TDRETLSSFKSEKTN) are enriched in basic and acidic residues. N-linked (GlcNAc...) asparagine glycosylation is present at Asn319. Position 370 is a phosphothreonine (Thr370). The segment covering 391–409 (PSKRQPPLRRHSPPGRAPR) has biased composition (basic residues). A phosphoserine mark is found at Ser392 and Ser431. Over residues 427–436 (GSELSPASSL) the composition is skewed to polar residues. The span at 444 to 460 (TDSSSSTSCYSPESSRG) shows a compositional bias: low complexity. Polar residues predominate over residues 488–497 (TQRTPSTASA). Ser505 is modified (phosphoserine). Helical transmembrane passes span 790–812 (VLEN…LLLL), 819–836 (IWVF…YSLL), 852–872 (WVIA…IWLL), 880–900 (PFPP…FFCA), 903–923 (VATV…LPQV), 946–968 (SPLT…YGFC), and 980–1000 (HVPV…YHLS). Ser1025 is modified (phosphoserine). Transmembrane regions (helical) follow at residues 1053–1073 (LVMC…TVFI), 1078–1098 (VLGF…HYLL), 1244–1264 (FVLT…HAFA), and 1280–1300 (LLSG…VFIM). At Ser1697 the chain carries Phosphoserine. A glycan (N-linked (GlcNAc...) asparagine) is linked at Asn1770. The disordered stretch occupies residues 1844 to 2034 (GGLTSLSNNP…AAQPLLEHQY (191 aa)). The segment covering 1890 to 1910 (RPPPLLQWPPPRLPGPPPASP) has biased composition (pro residues). Ser1909 carries the post-translational modification Phosphoserine. Over residues 1925–1939 (GLLSSEGPSGKWSLG) the composition is skewed to low complexity. Ser1955 bears the Phosphoserine mark. Low complexity predominate over residues 1969 to 1978 (LSLSLSLSLS).

This sequence belongs to the pecanex family.

The protein resides in the membrane. In Homo sapiens (Human), this protein is Pecanex-like protein 3.